A 65-amino-acid polypeptide reads, in one-letter code: Hirudin-3 (65 aa).

An interaction with thrombin active site region spans residues Val-1–Tyr-3. Disulfide bonds link Cys-6–Cys-14, Cys-16–Cys-28, and Cys-22–Cys-39. Residues Cys-39 to Gln-65 form a disordered region. Residue Thr-45 is glycosylated (O-linked (GalNAc...) threonine). Positions Asp-55–Gln-65 are interaction with fibrinogen-binding exosite of thrombin. Over residues Asp-55–Gln-65 the composition is skewed to acidic residues. A Sulfotyrosine modification is found at Tyr-63.

It belongs to the protease inhibitor I14 (hirudin) family.

It localises to the secreted. In terms of biological role, hirudin is a potent thrombin-specific protease inhibitor. It forms a stable non-covalent complex with alpha-thrombin, thereby abolishing its ability to cleave fibrinogen. In Hirudo medicinalis (Medicinal leech), this protein is Hirudin-3.